A 389-amino-acid polypeptide reads, in one-letter code: uncharacterized protein (389 aa).

WD repeat units lie at residues 11–53, 146–186, and 289–330; these read SFGS…QKIK, SHHD…EEDA, and AHGD…LDIP. Ser-351 bears the Phosphoserine mark. The interval 361–389 is disordered; that stretch reads QKESVSTRPRKEKHKKAKKHSMKSRFKPY. Residues 368 to 389 are compositionally biased toward basic residues; it reads RPRKEKHKKAKKHSMKSRFKPY.

This is an uncharacterized protein from Saccharomyces cerevisiae (strain ATCC 204508 / S288c) (Baker's yeast).